A 280-amino-acid chain; its full sequence is MIDDLFAGLPALEKGSVWLVGAGPGDPGLLTLHAANALRQADVIVHDALVNEDCLKLARPGAVLEFAGKRGGKPSPKQRDISLRLVELARAGNRVLRLKGGDPFVFGRGGEEALTLVEHQVPFRIVPGITAGIGGLAYAGIPVTHREVNHAVTFLTGHDSSGLVPDRINWQGIASGSPVIVMYMAMKHIGAITANLIAGGRSPDEPVAFVCNAATPQQAVLETTLARAEADVAAAGLEPPAIVVVGEVVRLRAALDWIGALDGRKLAADPFANRILRNPA.

S-adenosyl-L-homocysteine is bound by residues P24, 100-102 (GGD), 130-131 (TA), M184, A213, and A241.

This sequence belongs to the precorrin methyltransferase family. Homodimer.

The catalysed reaction is uroporphyrinogen III + 2 S-adenosyl-L-methionine = precorrin-2 + 2 S-adenosyl-L-homocysteine + H(+). It catalyses the reaction uroporphyrinogen III + S-adenosyl-L-methionine = precorrin-1 + S-adenosyl-L-homocysteine + H(+). The enzyme catalyses precorrin-1 + S-adenosyl-L-methionine = precorrin-2 + S-adenosyl-L-homocysteine. It functions in the pathway cofactor biosynthesis; adenosylcobalamin biosynthesis; precorrin-2 from uroporphyrinogen III: step 1/1. The protein operates within porphyrin-containing compound metabolism; siroheme biosynthesis; precorrin-2 from uroporphyrinogen III: step 1/1. S-adenosylhomocysteine is an extremely powerful competitive inhibitor of the uroporphyrinogen III methylation. SUMT exhibits a substrate inhibition phenomenon at uroporphyrinogen III concentrations above 2 uM; this property might play a regulatory role in cobalamin biosynthesis. The enzyme activity is completely insensitive to feedback inhibition by cobalamin and corrinoid intermediates. Its function is as follows. Catalyzes the two successive C-2 and C-7 methylation reactions involved in the conversion of uroporphyrinogen III to precorrin-2 via the intermediate formation of precorrin-1. It is a step in the biosynthesis of both cobalamin (vitamin B12) and siroheme. Neither uroporphyrin III nor the chlorin (factor I) is a substrate of SUMT. The protein is Uroporphyrinogen-III C-methyltransferase of Sinorhizobium sp.